Consider the following 896-residue polypeptide: Desmocollin-3 (896 aa).

Residues 1 to 26 (MAAPGSGAPCAELCRQLLLTLVVFSF) form the signal peptide. The propeptide occupies 27-134 (ACEACKKEIF…KETVLRRSKR (108 aa)). 5 consecutive Cadherin domains span residues 135 to 242 (RWAP…HPIF), 243 to 354 (TEAV…LPTF), 355 to 471 (RQNA…GPEC), 472 to 579 (SPEV…EILQ), and 580 to 690 (DYLV…ILGK). Residues 135-690 (RWAPIPCSMQ…RRSADVILGK (556 aa)) are Extracellular-facing. N-linked (GlcNAc...) asparagine glycosylation is present at Asn-165. Residues Asn-391, Asn-546, and Asn-629 are each glycosylated (N-linked (GlcNAc...) asparagine). The chain crosses the membrane as a helical span at residues 691 to 711 (WAILAILLGIALLFSILLTLV). Residues 712–896 (CGIVSARNKK…AALAKTCTKR (185 aa)) are Cytoplasmic-facing.

In terms of assembly, may form homodimers. Interacts with DSG1; there is evidence to suggest that the interaction promotes cell-cell adhesion of keratinocytes. In terms of tissue distribution, expressed in stratified epithelia only, such as the epidermis, tongue, esophagus and rumen (at protein level).

Its subcellular location is the cell membrane. The protein localises to the cell junction. The protein resides in the desmosome. It is found in the cytoplasm. Functionally, a component of desmosome cell-cell junctions which are required for positive regulation of cellular adhesion. Required for cell-cell adhesion in the epidermis, as a result required for the maintenance of the dermal cohesion and the dermal barrier function. Required for cell-cell adhesion of epithelial cell layers surrounding the telogen hair club, as a result plays an important role in telogen hair shaft anchorage. Essential for successful completion of embryo compaction and embryo development. This is Desmocollin-3 (DSC3) from Bos taurus (Bovine).